Here is a 117-residue protein sequence, read N- to C-terminus: Gamma-aminobutyric acid receptor-associated protein-like 1 (117 aa).

Gly116 carries Phosphatidylethanolamine amidated glycine; alternate lipidation. Residue Gly116 is the site of Phosphatidylserine amidated glycine; alternate attachment. Lys117 is a propeptide (removed in mature form).

The protein belongs to the ATG8 family. Interacts with ATG13, OPRK1, RB1CC1 and ULK1. Interacts with TP53INP1 and TP53INP2. Directly interacts with SQSTM1. Interacts with ATG3, ATG7 and MAP15. Interacts with TECPR2. Interacts with TBC1D5. Interacts with MAPK15. Interacts with TRIM5. Interacts with MEFV and TRIM21. Interacts with WDFY3. Interacts with the reticulophagy receptor TEX264. Interacts with UBA5. Interacts with KBTBD6 and KBTBD7; the interaction is direct. Interacts with reticulophagy regulators RETREG1, RETREG2 and RETREG3. Interacts with IRGM. Interacts with DNM2. Interacts with NCOA4 (via C-terminus). Post-translationally, the precursor molecule is cleaved by ATG4 (ATG4A, ATG4B, ATG4C or ATG4D) to expose the glycine at the C-terminus and form the cytosolic form, GABARAPL1-I. The processed form is then activated by APG7L/ATG7, transferred to ATG3 and conjugated to phosphatidylethanolamine (PE) phospholipid to form the membrane-bound form, GABARAPL1-II. During non-canonical autophagy, the processed form is conjugated to phosphatidylserine (PS) phospholipid. ATG4 proteins also mediate the delipidation of PE-conjugated forms required for GABARAPL1 recycling when autophagosomes fuse with lysosomes. In addition, ATG4B and ATG4D mediate delipidation of ATG8 proteins conjugated to PS during non-canonical autophagy. ATG4B constitutes the major protein for proteolytic activation. ATG4D is the main enzyme for delipidation activity.

The protein localises to the cytoplasmic vesicle. It is found in the autophagosome. The protein resides in the cytoplasmic vesicle membrane. Its subcellular location is the cytoplasm. It localises to the cytoskeleton. The protein localises to the endoplasmic reticulum. It is found in the golgi apparatus. In terms of biological role, ubiquitin-like modifier that increases cell-surface expression of kappa-type opioid receptor through facilitating anterograde intracellular trafficking of the receptor. Involved in formation of autophagosomal vacuoles. While LC3s are involved in elongation of the phagophore membrane, the GABARAP/GATE-16 subfamily is essential for a later stage in autophagosome maturation. Through its interaction with the reticulophagy receptor TEX264, participates in the remodeling of subdomains of the endoplasmic reticulum into autophagosomes upon nutrient stress, which then fuse with lysosomes for endoplasmic reticulum turnover. This chain is Gamma-aminobutyric acid receptor-associated protein-like 1, found in Bos taurus (Bovine).